The primary structure comprises 122 residues: Serum amyloid A-1 protein (122 aa).

Positions 1–19 (MKLLSGLLLCSLVLGVSSQ) are cleaved as a signal peptide. The important for amyloid formation stretch occupies residues 20-45 (RWFSFIGEATQGAWDMWRAYSDMREA). Residues 87–122 (MGHGAEDSMADQAANEWGRSGKDPNHFRPKGLPDKY) form a disordered region. Over residues 105–122 (RSGKDPNHFRPKGLPDKY) the composition is skewed to basic and acidic residues.

This sequence belongs to the SAA family. In terms of assembly, homohexamer; dimer of trimers. Can form amyloid fibrils after partial proteolysis; the native, undenatured protein does not form amyloid fibrils (in vitro). Apolipoprotein of the HDL complex. Binds to heparin. Detected in liver.

The protein localises to the secreted. Major acute phase protein. The sequence is that of Serum amyloid A-1 protein (SAA1) from Oryctolagus cuniculus (Rabbit).